A 512-amino-acid chain; its full sequence is UDP-N-acetylmuramate--L-alanine ligase (512 aa).

Position 132 to 138 (132 to 138) interacts with ATP; it reads GAHGKTT.

The protein belongs to the MurCDEF family.

The protein resides in the cytoplasm. The enzyme catalyses UDP-N-acetyl-alpha-D-muramate + L-alanine + ATP = UDP-N-acetyl-alpha-D-muramoyl-L-alanine + ADP + phosphate + H(+). It participates in cell wall biogenesis; peptidoglycan biosynthesis. Its function is as follows. Cell wall formation. The protein is UDP-N-acetylmuramate--L-alanine ligase of Bifidobacterium longum (strain DJO10A).